Here is a 145-residue protein sequence, read N- to C-terminus: Bacilliredoxin MW1318 (145 aa).

It belongs to the bacilliredoxin family.

The sequence is that of Bacilliredoxin MW1318 from Staphylococcus aureus (strain MW2).